The following is a 349-amino-acid chain: Nuclear distribution protein nudE homolog 1-A (349 aa).

Residues 22 to 189 (VAMKYKQCSE…ELAVQQKQEK (168 aa)) are a coiled coil.

Belongs to the nudE family. In terms of assembly, self-associates. Interacts with pafah1b1. In terms of processing, phosphorylated in mitosis.

The protein resides in the cytoplasm. Its subcellular location is the cytoskeleton. It localises to the microtubule organizing center. The protein localises to the centrosome. It is found in the spindle. The protein resides in the chromosome. Its subcellular location is the centromere. It localises to the kinetochore. The protein localises to the cleavage furrow. It is found in the cytoplasmic vesicle membrane. Functionally, required for centrosome duplication and formation and function of the mitotic spindle. This is Nuclear distribution protein nudE homolog 1-A (nde1-a) from Xenopus laevis (African clawed frog).